We begin with the raw amino-acid sequence, 410 residues long: Peptidase T-like protein YPO1009/y3403/YP_3421 (410 aa).

His-82 is a Zn(2+) binding site. Residue Asp-84 is part of the active site. Asp-144 is a binding site for Zn(2+). The active-site Proton acceptor is Glu-176. Residues Glu-177, Asp-200, and His-382 each contribute to the Zn(2+) site.

It belongs to the peptidase M20B family. Requires Zn(2+) as cofactor.

The polypeptide is Peptidase T-like protein YPO1009/y3403/YP_3421 (Yersinia pestis).